Reading from the N-terminus, the 1357-residue chain is DNA-directed RNA polymerase subunit beta (1357 aa).

This sequence belongs to the RNA polymerase beta chain family. In terms of assembly, the RNAP catalytic core consists of 2 alpha, 1 beta, 1 beta' and 1 omega subunit. When a sigma factor is associated with the core the holoenzyme is formed, which can initiate transcription.

It carries out the reaction RNA(n) + a ribonucleoside 5'-triphosphate = RNA(n+1) + diphosphate. In terms of biological role, DNA-dependent RNA polymerase catalyzes the transcription of DNA into RNA using the four ribonucleoside triphosphates as substrates. In Nitrosomonas europaea (strain ATCC 19718 / CIP 103999 / KCTC 2705 / NBRC 14298), this protein is DNA-directed RNA polymerase subunit beta.